An 875-amino-acid chain; its full sequence is Alanine--tRNA ligase (875 aa).

His-564, His-568, Cys-666, and His-670 together coordinate Zn(2+).

It belongs to the class-II aminoacyl-tRNA synthetase family. Homotetramer. Requires Zn(2+) as cofactor.

The protein localises to the cytoplasm. It carries out the reaction tRNA(Ala) + L-alanine + ATP = L-alanyl-tRNA(Ala) + AMP + diphosphate. In terms of biological role, catalyzes the attachment of alanine to tRNA(Ala) in a two-step reaction: alanine is first activated by ATP to form Ala-AMP and then transferred to the acceptor end of tRNA(Ala). Also edits incorrectly charged Ser-tRNA(Ala) and Gly-tRNA(Ala) via its editing domain. This chain is Alanine--tRNA ligase, found in Sodalis glossinidius (strain morsitans).